The sequence spans 114 residues: Ribonuclease P protein component (114 aa).

This sequence belongs to the RnpA family. In terms of assembly, consists of a catalytic RNA component (M1 or rnpB) and a protein subunit.

It catalyses the reaction Endonucleolytic cleavage of RNA, removing 5'-extranucleotides from tRNA precursor.. In terms of biological role, RNaseP catalyzes the removal of the 5'-leader sequence from pre-tRNA to produce the mature 5'-terminus. It can also cleave other RNA substrates such as 4.5S RNA. The protein component plays an auxiliary but essential role in vivo by binding to the 5'-leader sequence and broadening the substrate specificity of the ribozyme. In Borrelia hermsii (strain HS1 / DAH), this protein is Ribonuclease P protein component.